The chain runs to 680 residues: Probable inactive DNA (cytosine-5)-methyltransferase DRM3 (680 aa).

Residues 1–24 are disordered; that stretch reads MVKVEDDVEGSGINASVGDLRDAA. One can recognise a UBA 1 domain in the interval 45-86; the sequence is SSSSHVRSQFIGMGFSPMLVDRVLQKHGDRDSDTILEALLSQ. The tract at residues 91 to 113 is disordered; the sequence is KSGSESGSLGDLFDSDNEENSSH. The UBA 2 domain maps to 194-235; the sequence is SLFGVMDKTLHLLQMGFTEEEVSSVIDKAGPEATVLELADTI. The region spanning 336-663 is the SAM-dependent MTase DRM-type domain; it reads IRRNVRSDVA…QRVKHIMGRL (328 aa).

Belongs to the class I-like SAM-binding methyltransferase superfamily. DRM-methyltransferase family.

The protein localises to the nucleus. Functionally, involved in de novo DNA methylation. Involved in RNA-directed DNA methylation (RdDM). The polypeptide is Probable inactive DNA (cytosine-5)-methyltransferase DRM3 (Oryza sativa subsp. japonica (Rice)).